The sequence spans 284 residues: Tropomyosin alpha-3 chain (284 aa).

Position 1 is an N-acetylmethionine (methionine 1). A disordered region spans residues 1 to 40 (MEAIKKKMQMLKLDKENALDRAEQAEAEQKQAEERSKQLE). The stretch at 1-284 (MEAIKKKMQM…DHALNDMTSI (284 aa)) forms a coiled coil. A compositionally biased stretch (basic and acidic residues) spans 12-40 (KLDKENALDRAEQAEAEQKQAEERSKQLE). Threonine 53 carries the phosphothreonine modification. Phosphoserine occurs at positions 61 and 87. Residues threonine 108 and threonine 252 each carry the phosphothreonine modification. A Phosphotyrosine modification is found at tyrosine 261. Phosphoserine is present on serine 271. At threonine 282 the chain carries Phosphothreonine. Serine 283 carries the post-translational modification Phosphoserine.

The protein belongs to the tropomyosin family. In terms of assembly, homodimer. Heterodimer of an alpha (TPM1, TPM3 or TPM4) and a beta (TPM2) chain. Interacts with TMOD1. Interacts with TNNT1.

Its subcellular location is the cytoplasm. It localises to the cytoskeleton. Its function is as follows. Binds to actin filaments in muscle and non-muscle cells. Plays a central role, in association with the troponin complex, in the calcium dependent regulation of vertebrate striated muscle contraction. Smooth muscle contraction is regulated by interaction with caldesmon. In non-muscle cells is implicated in stabilizing cytoskeleton actin filaments. In Sus scrofa (Pig), this protein is Tropomyosin alpha-3 chain (TPM3).